The primary structure comprises 61 residues: Potassium channel toxin alpha-KTx 6.8 (61 aa).

Positions 1–23 are cleaved as a signal peptide; sequence MNAKFILLLLVVTTTILLPDTQG. Cystine bridges form between cysteine 29–cysteine 50, cysteine 35–cysteine 55, cysteine 39–cysteine 57, and cysteine 45–cysteine 60. Position 60 is a cysteine amide (cysteine 60).

Belongs to the short scorpion toxin superfamily. Potassium channel inhibitor family. Alpha-KTx 06 subfamily. As to expression, expressed by the venom gland.

Its subcellular location is the secreted. In terms of biological role, blocker of voltage-gated potassium channels. The protein is Potassium channel toxin alpha-KTx 6.8 of Opistophthalmus carinatus (African yellow leg scorpion).